Reading from the N-terminus, the 465-residue chain is Gamma-aminobutyric acid receptor subunit rho-2 (465 aa).

The N-terminal stretch at 1–20 (MPYFSRLILFLFCLVVLVES) is a signal peptide. The Extracellular segment spans residues 21–260 (RKPKKRRWTG…LYINFTLRRH (240 aa)). Arginine 105 serves as a coordination point for 4-aminobutanoate. An N-linked (GlcNAc...) asparagine glycan is attached at asparagine 120. Serine 169 serves as a coordination point for 4-aminobutanoate. Residues cysteine 178 and cysteine 192 are joined by a disulfide bond. 4-aminobutanoate is bound at residue glutamate 197. The N-linked (GlcNAc...) asparagine glycan is linked to asparagine 254. Residues 261–281 (IFFFLLQTYFPATLMVMLSWV) form a helical membrane-spanning segment. Topologically, residues 282-293 (SFWIDRRAVPAR) are cytoplasmic. Residues 294 to 314 (VSLGITTVLTMSTIITGVNAS) form a helical membrane-spanning segment. At 315 to 325 (MPRVSYIKAVD) the chain is on the extracellular side. A helical transmembrane segment spans residues 326 to 346 (IYLWVSFVFVFLSVLEYAAVN). The Cytoplasmic portion of the chain corresponds to 347 to 444 (YLTTVQERKE…FQNTHAIDKY (98 aa)). A helical transmembrane segment spans residues 445–465 (SRLIFPASYIFFNLIYWSVFA).

This sequence belongs to the ligand-gated ion channel (TC 1.A.9) family. Gamma-aminobutyric acid receptor (TC 1.A.9.5) subfamily. GABRR2 sub-subfamily. As to quaternary structure, three rho subunits (rho-1/GBRR1, rho-2/GBRR2 and rho-3/GBRR3) coassemble either to form functional homopentamers or heteropentamers. Rho-2 is unable to form a functional homopentamer. Interacts with SQSTM1.

It localises to the postsynaptic cell membrane. The protein localises to the cell membrane. The enzyme catalyses chloride(in) = chloride(out). In terms of biological role, rho subunit of the pentameric ligand-gated chloride channels responsible for mediating the effects of gamma-aminobutyric acid (GABA), the major inhibitory neurotransmitter in the brain. Rho-containing GABA-gated chloride channels are a subclass of GABA(A) receptors (GABAARs) entirely composed of rho subunits, where GABA molecules bind at the rho intersubunit interfaces. When activated by GABA, rho-GABAARs selectively allow the flow of chloride anions across the cell membrane down their electrochemical gradient. Rho-2 GABAARs may contribute to the regulation of glial development in the cerebellum by controlling extrasynaptic transmission. Rho-2 GABAARs are also involved in neuronal tonic (extrasynaptic) and phasic (synaptic) transmission in the Purkinje neurons of the cerebellum. Rho-2 GABAARs expressed in retina may play a role in retinal neurotransmission. The protein is Gamma-aminobutyric acid receptor subunit rho-2 (GABRR2) of Bos taurus (Bovine).